The sequence spans 365 residues: 5-hydroxytryptamine receptor 1F (365 aa).

At 1–24 the chain is on the extracellular side; sequence MDFLNSSDQNLTSEELLNRMPSKI. Residues Asn5 and Asn10 are each glycosylated (N-linked (GlcNAc...) asparagine). Residues 25 to 49 form a helical membrane-spanning segment; the sequence is LVSLTLSGLALMTTTINSLVIAAII. Residues 50–59 are Cytoplasmic-facing; it reads VTRKLHHPAN. The helical transmembrane segment at 60-81 threads the bilayer; sequence YLICSLAVTDFLVAVLVMPFSI. Over 82–96 the chain is Extracellular; the sequence is VYIVRESWIMGQVVC. A disulfide bond links Cys96 and Cys172. A helical membrane pass occupies residues 97 to 119; that stretch reads DIWLSVDITCCTCSILHLSAIAL. Serotonin contacts are provided by Asp103 and Cys107. The DRY motif; important for ligand-induced conformation changes signature appears at 120-122; that stretch reads DRY. The Cytoplasmic segment spans residues 120–139; sequence DRYRAITDAVEYARKRTPKH. Residues 140 to 159 form a helical membrane-spanning segment; it reads AGIMITIVWIISVFISMPPL. At 160 to 178 the chain is on the extracellular side; the sequence is FWRHQGTSRDDECIIKHDH. The chain crosses the membrane as a helical span at residues 179-202; the sequence is IVSTIYSTFGAFYIPLALILILYY. The Cytoplasmic portion of the chain corresponds to 203 to 291; sequence KIYRAAKTLY…KISGTRERKA (89 aa). Residues 292-315 form a helical membrane-spanning segment; the sequence is ATTLGLILGAFVICWLPFFVKELV. Over 316–327 the chain is Extracellular; that stretch reads VNVCDKCKISEE. The chain crosses the membrane as a helical span at residues 328–350; the sequence is MSNFLAWLGYLNSLINPLIYTIF. The short motif at 343 to 347 is the NPxxY motif; important for ligand-induced conformation changes and signaling element; it reads NPLIY. Over 351–365 the chain is Cytoplasmic; the sequence is NEDFKKAFQKLVRCR.

Belongs to the G-protein coupled receptor 1 family.

It localises to the cell membrane. Its function is as follows. G-protein coupled receptor for 5-hydroxytryptamine (serotonin). Also functions as a receptor for various alkaloids and psychoactive substances. Ligand binding causes a conformation change that triggers signaling via guanine nucleotide-binding proteins (G proteins) and modulates the activity of downstream effectors, such as adenylate cyclase. HTR1F is coupled to G(i)/G(o) G alpha proteins and mediates inhibitory neurotransmission by inhibiting adenylate cyclase activity. The chain is 5-hydroxytryptamine receptor 1F (HTR1F) from Pan troglodytes (Chimpanzee).